Consider the following 973-residue polypeptide: Splicing regulator ARVCF (973 aa).

The disordered stretch occupies residues 95–123; that stretch reads VTVEEDPGTPTSHVSIVTSEDGTTRRTET. A phosphothreonine mark is found at Thr103 and Thr105. Residues 103–115 show a composition bias toward polar residues; the sequence is TPTSHVSIVTSED. An Omega-N-methylarginine modification is found at Arg171. Disordered stretches follow at residues 233-254 and 267-331; these read RREAFPMGSESGPPSGRSLPEH and RSLA…QPER. Position 268 is a phosphoserine (Ser268). Over residues 271-281 the composition is skewed to acidic residues; the sequence is ADDEGGPDLEP. Basic and acidic residues predominate over residues 289–303; it reads RRPEYGRGLRARALE. 4 positions are modified to phosphoserine: Ser333, Ser336, Ser344, and Ser346. 6 ARM repeats span residues 349 to 388, 391 to 430, 434 to 468, 469 to 509, 527 to 566, and 576 to 623; these read STRKEPRWRDPELPEVLAMLRHPVDPVKANAAAYLQHLCF, EGIKRRVRQLRGLPLLVALLDHPRAEVRRRACGALRNLSY, ADNKAAIRDCGGVPALVRLLRAARDNEVRELVTGT, LWNL…NEDS, LRNVSSDGAEARRRLRECEGLVDALLHALQSAVGRKDTDN, and MRNL…GKKA. The segment at 593–623 is disordered; the sequence is YQEVEPGIPGSAATSQRRRKDDASCFGGKKA. Ser607 carries the phosphoserine modification. A Nuclear localization signal motif is present at residues 608-624; that stretch reads QRRRKDDASCFGGKKAK. Residue Thr637 is modified to Phosphothreonine. 4 ARM repeats span residues 641-681, 694-733, 734-776, and 777-821; these read PKRT…AAGA, TYIRATVRKERGLPVLVELLQSETDKVVRAVAIALRNLSL, DQRN…AVLN, and TIHE…SHVL. Positions 771 to 955 are required for interaction with RNA-binding proteins DDX5, HNRNPH2 and SRSF1 and with mRNAs; that stretch reads VVAVLNTIHE…VLGPGAPPFC (185 aa). Residues 844–926 form a disordered region; that stretch reads FQSASTAKGP…KELLKGPGPA (83 aa). Residue Ser865 is modified to Phosphoserine. A Phosphothreonine modification is found at Thr866. The segment covering 872 to 881 has biased composition (basic and acidic residues); that stretch reads KNLDGEKSTT.

This sequence belongs to the beta-catenin family. In terms of assembly, component of a ribonucleoprotein complex containing mRNAs and RNA-binding proteins including DDX5, HNRNPH2 and SRSF1 as well as ARVCF. Interacts (via the extreme C-terminus) with FRMPD2 (via the PDZ 2 domain). Interacts with CCDC85B. As to expression, expressed in optic nerve sheath envelope (at protein level). Expressed in heart (at protein level).

The protein resides in the cell junction. Its subcellular location is the adherens junction. It is found in the nucleus. The protein localises to the cytoplasm. Its function is as follows. Contributes to the regulation of alternative splicing of pre-mRNAs. The protein is Splicing regulator ARVCF of Rattus norvegicus (Rat).